Here is a 158-residue protein sequence, read N- to C-terminus: Protein BTG2 (158 aa).

Ser-147 bears the Phosphoserine; by MAPK1 and MAPK3 mark. Ser-149 is subject to Phosphoserine; by MAPK14.

This sequence belongs to the BTG family. In terms of assembly, interacts with PRKCABP. Interacts with CNOT7 and CNOT8; indicative for an association with the CCR4-NOT complex. Interacts with PIN1, inducing mitochondrial depolarization. In terms of processing, phosphorylated at Ser-147 by MAPK1/ERK2 and MAPK3/ERK1, and at Ser-149 by MAPK14, leading to PIN1-binding and mitochondrial depolarization.

In terms of biological role, anti-proliferative protein; the function is mediated by association with deadenylase subunits of the CCR4-NOT complex. Activates mRNA deadenylation in a CNOT6 and CNOT7-dependent manner. In vitro can inhibit deadenylase activity of CNOT7 and CNOT8. Involved in cell cycle regulation. Could be involved in the growth arrest and differentiation of the neuronal precursors. Modulates transcription regulation mediated by ESR1. Involved in mitochondrial depolarization and neurite outgrowth. The polypeptide is Protein BTG2 (BTG2) (Homo sapiens (Human)).